Here is a 198-residue protein sequence, read N- to C-terminus: Protein C4 (198 aa).

A disordered region spans residues 1 to 36; it reads MFNPRHPGGEFFGRKHHRRHAPDGRSSSSSSSSSEC.

The polypeptide is Protein C4 (C4) (Giardia intestinalis (Giardia lamblia)).